The following is a 335-amino-acid chain: ADP-L-glycero-D-manno-heptose-6-epimerase (335 aa).

NADP(+)-binding positions include 11–12, 32–33, Lys-39, 75–79, and Asn-92; these read FI, DD, and EGACS. The active-site Proton acceptor is Tyr-139. Position 143 (Lys-143) interacts with NADP(+). Asn-172 provides a ligand contact to substrate. NADP(+) contacts are provided by Val-173 and Lys-181. The active-site Proton acceptor is the Lys-181. Substrate contacts are provided by residues Arg-183, His-190, 204-207, Arg-217, and Tyr-296; that span reads FGDY.

It belongs to the NAD(P)-dependent epimerase/dehydratase family. HldD subfamily. Homopentamer. The cofactor is NADP(+).

The enzyme catalyses ADP-D-glycero-beta-D-manno-heptose = ADP-L-glycero-beta-D-manno-heptose. The protein operates within nucleotide-sugar biosynthesis; ADP-L-glycero-beta-D-manno-heptose biosynthesis; ADP-L-glycero-beta-D-manno-heptose from D-glycero-beta-D-manno-heptose 7-phosphate: step 4/4. Functionally, catalyzes the interconversion between ADP-D-glycero-beta-D-manno-heptose and ADP-L-glycero-beta-D-manno-heptose via an epimerization at carbon 6 of the heptose. The sequence is that of ADP-L-glycero-D-manno-heptose-6-epimerase from Polaromonas naphthalenivorans (strain CJ2).